A 229-amino-acid polypeptide reads, in one-letter code: MGKKYTESVKLVDKNALYTVQEAIELVTKTSKAKFDETVELAVRLGVDPRHADQQVRGAVVLPHGTGKTVRVLVFAKGDKVNEAQEAGADFVGAEELVEKIQKENWFDFDVVVATPDMMGVVGRLGRVLGPKGLMPNPKSGTVTFDVAKAIADIKAGKVEYRVDKTAIIHVPIGKSSFGEEKLSDNFHVLMEAVVKAKPAAAKGQYIKSVAISSTMGPGIKINPGKVLE.

The protein belongs to the universal ribosomal protein uL1 family. As to quaternary structure, part of the 50S ribosomal subunit.

Functionally, binds directly to 23S rRNA. The L1 stalk is quite mobile in the ribosome, and is involved in E site tRNA release. Its function is as follows. Protein L1 is also a translational repressor protein, it controls the translation of the L11 operon by binding to its mRNA. This chain is Large ribosomal subunit protein uL1, found in Clostridium botulinum (strain Loch Maree / Type A3).